An 89-amino-acid polypeptide reads, in one-letter code: MALSTEQKKSILAEYGLHETDTGSPEAQVALLSARINQLTEHLKFHKHDHHSRRGLLLLVGRRKGLLKYLADNNVDRYRDLIARLGLRR.

The protein belongs to the universal ribosomal protein uS15 family. In terms of assembly, part of the 30S ribosomal subunit. Forms a bridge to the 50S subunit in the 70S ribosome, contacting the 23S rRNA.

One of the primary rRNA binding proteins, it binds directly to 16S rRNA where it helps nucleate assembly of the platform of the 30S subunit by binding and bridging several RNA helices of the 16S rRNA. Its function is as follows. Forms an intersubunit bridge (bridge B4) with the 23S rRNA of the 50S subunit in the ribosome. The sequence is that of Small ribosomal subunit protein uS15 from Corynebacterium diphtheriae (strain ATCC 700971 / NCTC 13129 / Biotype gravis).